Consider the following 387-residue polypeptide: O-methyltransferase asqD (387 aa).

Residue Asp-252 coordinates S-adenosyl-L-methionine. The active-site Proton acceptor is the His-294.

The protein belongs to the class I-like SAM-binding methyltransferase superfamily. Cation-independent O-methyltransferase family.

The protein operates within secondary metabolite biosynthesis. It functions in the pathway alkaloid biosynthesis. It participates in mycotoxin biosynthesis. Functionally, O-methyltransferase; part of the gene cluster that mediates the biosynthesis of the aspoquinolone mycotoxins. The role of asqD within the aspoquinolone pathway has still to be determined. The first step of the pathway is catalyzed by the nonribosomal peptide synthetase asqK that condenses anthranilic acid and O-methyl-L-tyrosine to produce 4'-methoxycyclopeptin. 4'-methoxycyclopeptin is then converted to 4'-methoxydehydrocyclopeptin by the ketoglutarate-dependent dioxygenase asqJ. AsqJ also converts its first product 4'-methoxydehydrocyclopeptin to 4'-methoxycyclopenin. The following conversion of 4'-methoxycyclopenin into 4'-methoxyviridicatin is catalyzed by the cyclopenase asqI. 4'-methoxyviridicatin is the precursor of quinolone natural products, and is further converted to quinolinone B. The prenyltransferase asqH1 then catalyzes the canonical Friedel-Crafts alkylation of quinolinone B with dimethylallyl cation to yield dimethylallyl quinolone, which is subjected to FAD-dependent dehydrogenation by the FAD-linked oxidoreductase asqF to yield conjugated aryl diene. The delta(3') double bond then serves as the site of the second alkylation with DMAPP catalyzed by the prenyltransferase asqH2 to yield a carbenium ion intermediate, which can be attacked by H(2)O to yield a styrenyl quinolone containing a C3'-hydroxyprenyl chain. The FAD-dependent monooxygenase asqG performs epoxidation of the terminal C7'-C8' olefin. Finally, after dehydratation of the epoxide at C3 by asqC, the quinolone epoxide rearrangement protein asqO catalyzes an enzymatic 3-exo-tet cyclization to yield the cyclopropyl-THF ring system in aspoquinolone. This is O-methyltransferase asqD from Emericella nidulans (strain FGSC A4 / ATCC 38163 / CBS 112.46 / NRRL 194 / M139) (Aspergillus nidulans).